The primary structure comprises 110 residues: Mitochondrial pyruvate carrier 1 (110 aa).

2 helical membrane passes run 20-36 (HFWGPIANWGFVAAGLV) and 44-61 (MISGNMSSAMCVYSALFM).

It belongs to the mitochondrial pyruvate carrier (MPC) (TC 2.A.105) family.

It is found in the mitochondrion inner membrane. Functionally, mediates the uptake of pyruvate into mitochondria. The polypeptide is Mitochondrial pyruvate carrier 1 (Arabidopsis thaliana (Mouse-ear cress)).